A 281-amino-acid chain; its full sequence is Lipoyl synthase (281 aa).

7 residues coordinate [4Fe-4S] cluster: C35, C40, C46, C61, C65, C68, and S274. One can recognise a Radical SAM core domain in the interval 47 to 263 (FGCGQATFLI…RDEALALGFR (217 aa)).

This sequence belongs to the radical SAM superfamily. Lipoyl synthase family. Requires [4Fe-4S] cluster as cofactor.

It localises to the cytoplasm. The catalysed reaction is [[Fe-S] cluster scaffold protein carrying a second [4Fe-4S](2+) cluster] + N(6)-octanoyl-L-lysyl-[protein] + 2 oxidized [2Fe-2S]-[ferredoxin] + 2 S-adenosyl-L-methionine + 4 H(+) = [[Fe-S] cluster scaffold protein] + N(6)-[(R)-dihydrolipoyl]-L-lysyl-[protein] + 4 Fe(3+) + 2 hydrogen sulfide + 2 5'-deoxyadenosine + 2 L-methionine + 2 reduced [2Fe-2S]-[ferredoxin]. Its pathway is protein modification; protein lipoylation via endogenous pathway; protein N(6)-(lipoyl)lysine from octanoyl-[acyl-carrier-protein]: step 2/2. Functionally, catalyzes the radical-mediated insertion of two sulfur atoms into the C-6 and C-8 positions of the octanoyl moiety bound to the lipoyl domains of lipoate-dependent enzymes, thereby converting the octanoylated domains into lipoylated derivatives. The protein is Lipoyl synthase of Trichlorobacter lovleyi (strain ATCC BAA-1151 / DSM 17278 / SZ) (Geobacter lovleyi).